A 302-amino-acid chain; its full sequence is N-acetyl-D-glucosamine kinase (302 aa).

ATP is bound by residues 4–11 (GFDVGGTK) and 133–140 (GFGGGFIY). Zn(2+) contacts are provided by His157, Cys177, Cys179, and Cys184.

It belongs to the ROK (NagC/XylR) family. NagK subfamily.

It catalyses the reaction N-acetyl-D-glucosamine + ATP = N-acetyl-D-glucosamine 6-phosphate + ADP + H(+). It functions in the pathway cell wall biogenesis; peptidoglycan recycling. Its function is as follows. Catalyzes the phosphorylation of N-acetyl-D-glucosamine (GlcNAc) derived from cell-wall degradation, yielding GlcNAc-6-P. In Vibrio parahaemolyticus serotype O3:K6 (strain RIMD 2210633), this protein is N-acetyl-D-glucosamine kinase.